Here is a 143-residue protein sequence, read N- to C-terminus: Large-conductance mechanosensitive channel (143 aa).

2 helical membrane passes run 10 to 30 and 89 to 109; these read FAVKGNVMDLAVGVIIGGAFS and GSFITVAINFVILAFIIFLMV.

The protein belongs to the MscL family. As to quaternary structure, homopentamer.

It localises to the cell inner membrane. Channel that opens in response to stretch forces in the membrane lipid bilayer. May participate in the regulation of osmotic pressure changes within the cell. The protein is Large-conductance mechanosensitive channel of Burkholderia cenocepacia (strain ATCC BAA-245 / DSM 16553 / LMG 16656 / NCTC 13227 / J2315 / CF5610) (Burkholderia cepacia (strain J2315)).